We begin with the raw amino-acid sequence, 161 residues long: Protein-export protein SecB (161 aa).

The protein belongs to the SecB family. As to quaternary structure, homotetramer, a dimer of dimers. One homotetramer interacts with 1 SecA dimer.

Its subcellular location is the cytoplasm. Functionally, one of the proteins required for the normal export of preproteins out of the cell cytoplasm. It is a molecular chaperone that binds to a subset of precursor proteins, maintaining them in a translocation-competent state. It also specifically binds to its receptor SecA. In Pseudomonas fluorescens (strain Pf0-1), this protein is Protein-export protein SecB.